The sequence spans 210 residues: Glutathione S-transferase P (210 aa).

One can recognise a GST N-terminal domain in the interval 2 to 81 (PPYTVVYFPV…HLGRTLGLYG (80 aa)). At Tyr-4 the chain carries Phosphotyrosine; by EGFR. Glutathione contacts are provided by residues Tyr-8, Arg-14, Trp-39, Lys-45, and 52 to 53 (QL). A Phosphothreonine modification is found at Thr-62. 65–66 (QS) lines the glutathione pocket. The GST C-terminal domain maps to 83–204 (DQQEAALVDM…ASPEYVNLPI (122 aa)). N6-succinyllysine is present on residues Lys-103 and Lys-116. The residue at position 128 (Lys-128) is an N6-acetyllysine. Tyr-199 bears the Phosphotyrosine; by EGFR mark.

Belongs to the GST superfamily. Pi family. In terms of assembly, homodimer. Interacts with CDK5.

The protein localises to the cytoplasm. It is found in the mitochondrion. Its subcellular location is the nucleus. It carries out the reaction RX + glutathione = an S-substituted glutathione + a halide anion + H(+). The enzyme catalyses prostaglandin J2 + glutathione = prostaglandin J2-S-(R)-glutathione. The catalysed reaction is prostaglandin J2 + glutathione = prostaglandin J2-S-(S)-glutathione. It catalyses the reaction prostaglandin A2 + glutathione = prostaglandin A2-S-(S)-glutathione. It carries out the reaction 11(S)-hydroxy-14(S),15(S)-epoxy-(5Z,8Z,12E)-eicosatrienoate + glutathione = (11S,15S)-dihydroxy-14(R)-S-glutathionyl-(5Z,8Z,12E)-eicosatrienoate. Conjugation of reduced glutathione to a wide number of exogenous and endogenous hydrophobic electrophiles. Involved in the formation of glutathione conjugates of both prostaglandin A2 (PGA2) and prostaglandin J2 (PGJ2). Participates in the formation of novel hepoxilin regioisomers. Negatively regulates CDK5 activity via p25/p35 translocation to prevent neurodegeneration. In Homo sapiens (Human), this protein is Glutathione S-transferase P.